The primary structure comprises 349 residues: Protein Wnt-7b (349 aa).

An N-terminal signal peptide occupies residues 1–24; the sequence is MHRNFRKWIFYVFLCFGVLYVKLG. 5 disulfides stabilise this stretch: C73–C84, C123–C131, C133–C152, C200–C214, and C202–C209. 2 N-linked (GlcNAc...) asparagine glycosylation sites follow: N83 and N127. S206 carries O-palmitoleoyl serine; by PORCN lipidation. The segment at 238–266 is disordered linker; sequence VEVVRASRLRQPTFLRIKQLRSYQKPMET. Cystine bridges form between C278–C309, C294–C304, C308–C348, C324–C339, C326–C336, and C331–C332. N-linked (GlcNAc...) asparagine glycosylation occurs at N295.

It belongs to the Wnt family. As to quaternary structure, forms a soluble 1:1 complex with AFM; this prevents oligomerization and is required for prolonged biological activity. The complex with AFM may represent the physiological form in body fluids. Interacts with FZD1 and FZD10. Interacts with FZD4 (in vitro). Interacts with PORCN. Interacts with glypican GPC3. Interacts (via intrinsically disordered linker region) with RECK; interaction with RECK confers ligand selectivity for Wnt7 in brain endothelial cells and allows these cells to selectively respond to Wnt7. In terms of processing, palmitoleoylation is required for efficient binding to frizzled receptors. Depalmitoleoylation leads to Wnt signaling pathway inhibition. In terms of tissue distribution, moderately expressed in fetal brain, weakly expressed in fetal lung and kidney, and faintly expressed in adult brain, lung and prostate.

The protein localises to the secreted. Its subcellular location is the extracellular space. It is found in the extracellular matrix. Functionally, ligand for members of the frizzled family of seven transmembrane receptors that functions in the canonical Wnt/beta-catenin signaling pathway. Required for normal fusion of the chorion and the allantois during placenta development. Required for central nervous system (CNS) angiogenesis and blood-brain barrier regulation. This is Protein Wnt-7b (WNT7B) from Homo sapiens (Human).